Consider the following 1377-residue polypeptide: DNA-directed RNA polymerase subunit beta (1377 aa).

Belongs to the RNA polymerase beta chain family. The RNAP catalytic core consists of 2 alpha, 1 beta, 1 beta' and 1 omega subunit. When a sigma factor is associated with the core the holoenzyme is formed, which can initiate transcription.

The enzyme catalyses RNA(n) + a ribonucleoside 5'-triphosphate = RNA(n+1) + diphosphate. In terms of biological role, DNA-dependent RNA polymerase catalyzes the transcription of DNA into RNA using the four ribonucleoside triphosphates as substrates. The protein is DNA-directed RNA polymerase subunit beta of Orientia tsutsugamushi (strain Boryong) (Rickettsia tsutsugamushi).